We begin with the raw amino-acid sequence, 385 residues long: Probable dual-specificity RNA methyltransferase RlmN (385 aa).

Residues 1–24 (MTATTAESGNLLPLVSGRSRPPRH) are disordered. Glu114 functions as the Proton acceptor in the catalytic mechanism. The region spanning 120–364 (YPQRATVCVS…AATVRDTRGR (245 aa)) is the Radical SAM core domain. Residues Cys127 and Cys370 are joined by a disulfide bond. [4Fe-4S] cluster-binding residues include Cys134, Cys138, and Cys141. Residues 194–195 (GE), Ser228, 251–253 (SLH), and Asn327 contribute to the S-adenosyl-L-methionine site. The active-site S-methylcysteine intermediate is Cys370.

The protein belongs to the radical SAM superfamily. RlmN family. [4Fe-4S] cluster serves as cofactor.

The protein resides in the cytoplasm. It catalyses the reaction adenosine(2503) in 23S rRNA + 2 reduced [2Fe-2S]-[ferredoxin] + 2 S-adenosyl-L-methionine = 2-methyladenosine(2503) in 23S rRNA + 5'-deoxyadenosine + L-methionine + 2 oxidized [2Fe-2S]-[ferredoxin] + S-adenosyl-L-homocysteine. The catalysed reaction is adenosine(37) in tRNA + 2 reduced [2Fe-2S]-[ferredoxin] + 2 S-adenosyl-L-methionine = 2-methyladenosine(37) in tRNA + 5'-deoxyadenosine + L-methionine + 2 oxidized [2Fe-2S]-[ferredoxin] + S-adenosyl-L-homocysteine. Specifically methylates position 2 of adenine 2503 in 23S rRNA and position 2 of adenine 37 in tRNAs. The sequence is that of Probable dual-specificity RNA methyltransferase RlmN from Parafrankia sp. (strain EAN1pec).